Reading from the N-terminus, the 316-residue chain is tRNA selenocysteine 1-associated protein 1-like (316 aa).

2 RRM domains span residues 6–89 and 99–178; these read TSLW…YATY and FSVF…IAVN. The span at 239–248 shows a compositional bias: pro residues; the sequence is PPMGMPPMPP. The disordered stretch occupies residues 239–285; it reads PPMGMPPMPPDMQGSTEAHDGTEEVEEDPSEDPNPQVDVEELNRQYM.

Belongs to the RRM TRSPAP family.

The protein resides in the nucleus. It localises to the cytoplasm. Its function is as follows. Involved in the early steps of selenocysteine biosynthesis and tRNA(Sec) charging to the later steps resulting in the cotranslational incorporation of selenocysteine into selenoproteins. The polypeptide is tRNA selenocysteine 1-associated protein 1-like (trnau1apl) (Danio rerio (Zebrafish)).